Consider the following 61-residue polypeptide: Type IV secretion system protein PtlI homolog (61 aa).

The signal sequence occupies residues 1–25 (MIHAHSNARLLRWAILAIAPATLGA). A disordered region spans residues 29-61 (NGPPGLPYPDGKPLIPINTAAPEQGSSCQTRAP). The span at 52–61 (QGSSCQTRAP) shows a compositional bias: polar residues.

This is Type IV secretion system protein PtlI homolog (ptlI) from Bordetella bronchiseptica (strain ATCC BAA-588 / NCTC 13252 / RB50) (Alcaligenes bronchisepticus).